The following is an 88-amino-acid chain: Small ribosomal subunit protein bS16 (88 aa).

This sequence belongs to the bacterial ribosomal protein bS16 family.

This chain is Small ribosomal subunit protein bS16, found in Geotalea daltonii (strain DSM 22248 / JCM 15807 / FRC-32) (Geobacter daltonii).